Here is a 196-residue protein sequence, read N- to C-terminus: Lipoprotein signal peptidase (196 aa).

A run of 3 helical transmembrane segments spans residues 43–63 (LMLKVTAFLNMVYTWNYGISF), 75–95 (AVFILTNSIIVCYLYYLMVCS), and 100–120 (GFAGYSFVIGGAVGNLIDRLF). Active-site residues include aspartate 126 and aspartate 144. A helical membrane pass occupies residues 135-155 (YSFPVFNLADCFITIGVIILI).

Belongs to the peptidase A8 family.

The protein localises to the cell inner membrane. It carries out the reaction Release of signal peptides from bacterial membrane prolipoproteins. Hydrolyzes -Xaa-Yaa-Zaa-|-(S,diacylglyceryl)Cys-, in which Xaa is hydrophobic (preferably Leu), and Yaa (Ala or Ser) and Zaa (Gly or Ala) have small, neutral side chains.. It functions in the pathway protein modification; lipoprotein biosynthesis (signal peptide cleavage). Its function is as follows. This protein specifically catalyzes the removal of signal peptides from prolipoproteins. This chain is Lipoprotein signal peptidase, found in Rickettsia canadensis (strain McKiel).